The chain runs to 164 residues: Large ribosomal subunit protein uL15 (164 aa).

Residues 1–33 (MTSKKRRQRGSRTHGGGTHKNRRGAGHRGGRGR) are compositionally biased toward basic residues. Disordered stretches follow at residues 1 to 59 (MTSK…PGAE) and 137 to 164 (AGGSATLTEQGKSIAVGEDEEPNSNDEN). Residues 34 to 43 (AGRDKHEQHN) show a composition bias toward basic and acidic residues. Acidic residues predominate over residues 153-164 (GEDEEPNSNDEN).

This sequence belongs to the universal ribosomal protein uL15 family. Part of the 50S ribosomal subunit.

Binds to the 23S rRNA. The sequence is that of Large ribosomal subunit protein uL15 from Haloquadratum walsbyi (strain DSM 16790 / HBSQ001).